A 463-amino-acid polypeptide reads, in one-letter code: Quinolone resistance protein NorB (463 aa).

Helical transmembrane passes span I17–V37, I53–A73, I86–I106, I107–I127, Y142–A162, L165–I185, F201–T221, S230–L250, T273–V293, Y299–I319, P334–L354, I357–Y377, M403–V423, and I435–V455.

This sequence belongs to the major facilitator superfamily. TCR/Tet family.

The protein resides in the cell membrane. Functionally, multidrug efflux pump that acts independently of NorA and is one of the factors that confers resistance against diverse quinolones and chemical compounds. The chain is Quinolone resistance protein NorB (norB) from Staphylococcus aureus (strain USA300).